Consider the following 75-residue polypeptide: Putative antitoxin VapB12 (75 aa).

Functionally, putative antitoxin component of a possible type II toxin-antitoxin (TA) system. The cognate toxin is VapC12. The polypeptide is Putative antitoxin VapB12 (vapB12) (Mycobacterium tuberculosis (strain CDC 1551 / Oshkosh)).